Here is a 227-residue protein sequence, read N- to C-terminus: Ferritin light chain (227 aa).

Residues 1-19 (MKFFVALALFACLGSLALA) form the signal peptide. A disulfide bridge links C25 with C44. Residues 48–208 (FAGIDHIEPE…GYANDLAKLM (161 aa)) enclose the Ferritin-like diiron domain.

This sequence belongs to the ferritin family. As to quaternary structure, oligomer of 12 light (L) chains and 12 heavy (H) chains; L and H chains are disulfide-linked. The functional molecule forms a roughly spherical shell with a diameter of 12 nm and contains a central cavity into which the insoluble ferric iron core is deposited. In terms of tissue distribution, expressed in hemolymph, gut, ovaries and to a lesser extent in testes (at protein level). Expressed in the head (at protein level).

It is found in the golgi apparatus. Its subcellular location is the secreted. Functionally, stores iron in a soluble, non-toxic, readily available form. Important for iron homeostasis. Iron is taken up in the ferrous form and deposited as ferric hydroxides after oxidation. Ferritin is composed of a heavy (H) chain which is responsible for the oxidation and uptake of ferrous iron, and a light (L) chain which facilitates the nucleation of the ferrihydrite iron core. Required for dietary iron absorption in the midgut. Involved in tissue iron detoxification by exporting excess iron. Plays a role in the maintenance of circadian rhythms. Required for embryo and larval development. In Drosophila melanogaster (Fruit fly), this protein is Ferritin light chain.